Reading from the N-terminus, the 439-residue chain is Methylenetetrahydrofolate--tRNA-(uracil-5-)-methyltransferase TrmFO (439 aa).

FAD is bound at residue 8–13; it reads GAGLAG.

It belongs to the MnmG family. TrmFO subfamily. FAD is required as a cofactor.

The protein localises to the cytoplasm. The enzyme catalyses uridine(54) in tRNA + (6R)-5,10-methylene-5,6,7,8-tetrahydrofolate + NADH + H(+) = 5-methyluridine(54) in tRNA + (6S)-5,6,7,8-tetrahydrofolate + NAD(+). It catalyses the reaction uridine(54) in tRNA + (6R)-5,10-methylene-5,6,7,8-tetrahydrofolate + NADPH + H(+) = 5-methyluridine(54) in tRNA + (6S)-5,6,7,8-tetrahydrofolate + NADP(+). Its function is as follows. Catalyzes the folate-dependent formation of 5-methyl-uridine at position 54 (M-5-U54) in all tRNAs. In Magnetococcus marinus (strain ATCC BAA-1437 / JCM 17883 / MC-1), this protein is Methylenetetrahydrofolate--tRNA-(uracil-5-)-methyltransferase TrmFO.